Reading from the N-terminus, the 221-residue chain is MAKNKFNHSWLHDHINDPYVKMAQREGYRARAAYKLKEIDEQDKLIRPGQVIVDLGAAPGSWSQYARNKLADSPRAKDGRIDGAVVAIDLLPMEPVADVTFIQGDFREESVFRELESVVLDASGGNKIDLVLSDMAPNLSGVAFADAARIEYLCDLALEFAQAHLKPEGALLVKCFHGSGYSQIVEKFKRHFKVVAKRKPKASRDKSSETFILGRYLKAVD.

5 residues coordinate S-adenosyl-L-methionine: G60, W62, D89, D105, and D134. K174 serves as the catalytic Proton acceptor.

Belongs to the class I-like SAM-binding methyltransferase superfamily. RNA methyltransferase RlmE family.

It localises to the cytoplasm. It carries out the reaction uridine(2552) in 23S rRNA + S-adenosyl-L-methionine = 2'-O-methyluridine(2552) in 23S rRNA + S-adenosyl-L-homocysteine + H(+). In terms of biological role, specifically methylates the uridine in position 2552 of 23S rRNA at the 2'-O position of the ribose in the fully assembled 50S ribosomal subunit. The chain is Ribosomal RNA large subunit methyltransferase E from Cupriavidus necator (strain ATCC 17699 / DSM 428 / KCTC 22496 / NCIMB 10442 / H16 / Stanier 337) (Ralstonia eutropha).